The following is a 357-amino-acid chain: Glutamine synthetase cytosolic isozyme (357 aa).

Residues 20 to 100 (VIAEYIWIGG…VICDAYSPNG (81 aa)) form the GS beta-grasp domain. Positions 107-357 (KRAAAAKIFN…IAETTILWKP (251 aa)) constitute a GS catalytic domain.

It belongs to the glutamine synthetase family. As to quaternary structure, homooctamer.

The protein resides in the cytoplasm. The enzyme catalyses L-glutamate + NH4(+) + ATP = L-glutamine + ADP + phosphate + H(+). This is Glutamine synthetase cytosolic isozyme from Pinus sylvestris (Scotch pine).